A 769-amino-acid chain; its full sequence is Multiple C2 domain and transmembrane region protein 5 (769 aa).

C2 domains follow at residues 23–143, 184–305, and 345–467; these read SVTG…PQWY, PEGV…SRWF, and YSSD…THSY. Ca(2+) is bound by residues Asp56, Asp62, Asp109, Asp111, and Asp116. 2 consecutive transmembrane segments (helical) span residues 604–624 and 712–732; these read IILV…LFLI and LFVL…FQVV.

The protein belongs to the MCTP family. Ca(2+) serves as cofactor. As to expression, highly expressed in roots meristems and shoot apical meristems (SAMs). Observed in flowers.

The protein resides in the endoplasmic reticulum membrane. Functionally, may function as a signaling molecule by regulating the trafficking of other regulators. The chain is Multiple C2 domain and transmembrane region protein 5 from Arabidopsis thaliana (Mouse-ear cress).